The primary structure comprises 137 residues: Large ribosomal subunit protein uL16 (137 aa).

This sequence belongs to the universal ribosomal protein uL16 family. Part of the 50S ribosomal subunit.

Binds 23S rRNA and is also seen to make contacts with the A and possibly P site tRNAs. This is Large ribosomal subunit protein uL16 from Methylorubrum extorquens (strain CM4 / NCIMB 13688) (Methylobacterium extorquens).